The following is a 123-amino-acid chain: Small ribosomal subunit protein uS13 (123 aa).

A disordered region spans residues 103–123 (TRTNARTRKGPKKTVGVRRKK). Over residues 105–123 (TNARTRKGPKKTVGVRRKK) the composition is skewed to basic residues.

This sequence belongs to the universal ribosomal protein uS13 family. As to quaternary structure, part of the 30S ribosomal subunit. Forms a loose heterodimer with protein S19. Forms two bridges to the 50S subunit in the 70S ribosome.

In terms of biological role, located at the top of the head of the 30S subunit, it contacts several helices of the 16S rRNA. In the 70S ribosome it contacts the 23S rRNA (bridge B1a) and protein L5 of the 50S subunit (bridge B1b), connecting the 2 subunits; these bridges are implicated in subunit movement. Contacts the tRNAs in the A and P-sites. In Desulforudis audaxviator (strain MP104C), this protein is Small ribosomal subunit protein uS13.